The sequence spans 156 residues: Calglandulin (156 aa).

EF-hand domains are found at residues Glu-8–Asn-43, Pro-44–Lys-79, Asn-82–Pro-117, and Leu-118–Lys-153. The Ca(2+) site is built by Asp-131, Asp-133, Asp-135, Thr-137, and Glu-142.

It belongs to the calmodulin family. Calglandulin subfamily. In terms of tissue distribution, expressed by the venom gland.

The protein resides in the cytoplasm. Functionally, may be involved in the cellular control mechanism of the secretion of toxins from the gland into the venom. The protein is Calglandulin of Tropidechis carinatus (Australian rough-scaled snake).